A 462-amino-acid polypeptide reads, in one-letter code: Cysteine--tRNA ligase (462 aa).

C30 provides a ligand contact to Zn(2+). The 'HIGH' region signature appears at 32-42; the sequence is MTVYDYCHIGH. The Zn(2+) site is built by C214, H239, and E243. The short motif at 271-275 is the 'KMSKS' region element; the sequence is KMSKS. K274 lines the ATP pocket.

This sequence belongs to the class-I aminoacyl-tRNA synthetase family. Monomer. Zn(2+) serves as cofactor.

Its subcellular location is the cytoplasm. It carries out the reaction tRNA(Cys) + L-cysteine + ATP = L-cysteinyl-tRNA(Cys) + AMP + diphosphate. The chain is Cysteine--tRNA ligase from Herminiimonas arsenicoxydans.